The primary structure comprises 997 residues: Phosphoenolpyruvate carboxylase (997 aa).

The disordered stretch occupies residues methionine 1–lysine 67. Active-site residues include histidine 207 and lysine 649.

It belongs to the PEPCase type 1 family. It depends on Mg(2+) as a cofactor.

It catalyses the reaction oxaloacetate + phosphate = phosphoenolpyruvate + hydrogencarbonate. Functionally, forms oxaloacetate, a four-carbon dicarboxylic acid source for the tricarboxylic acid cycle. The chain is Phosphoenolpyruvate carboxylase from Burkholderia vietnamiensis (strain G4 / LMG 22486) (Burkholderia cepacia (strain R1808)).